Reading from the N-terminus, the 552-residue chain is Hydroxylamine reductase (552 aa).

4 residues coordinate [2Fe-2S] cluster: Cys-5, Cys-8, Cys-20, and Cys-27. Residues His-251, Glu-275, Cys-319, Cys-407, Cys-435, Cys-460, Glu-494, and Lys-496 each contribute to the hybrid [4Fe-2O-2S] cluster site. Cysteine persulfide is present on Cys-407.

Belongs to the HCP family. The cofactor is [2Fe-2S] cluster. Hybrid [4Fe-2O-2S] cluster serves as cofactor.

Its subcellular location is the cytoplasm. The catalysed reaction is A + NH4(+) + H2O = hydroxylamine + AH2 + H(+). Catalyzes the reduction of hydroxylamine to form NH(3) and H(2)O. This Shigella boydii serotype 4 (strain Sb227) protein is Hydroxylamine reductase.